Here is a 248-residue protein sequence, read N- to C-terminus: tRNA pseudouridine synthase A (248 aa).

The Nucleophile role is filled by D53. Y111 serves as a coordination point for substrate.

It belongs to the tRNA pseudouridine synthase TruA family. Homodimer.

The enzyme catalyses uridine(38/39/40) in tRNA = pseudouridine(38/39/40) in tRNA. Functionally, formation of pseudouridine at positions 38, 39 and 40 in the anticodon stem and loop of transfer RNAs. The sequence is that of tRNA pseudouridine synthase A from Listeria welshimeri serovar 6b (strain ATCC 35897 / DSM 20650 / CCUG 15529 / CIP 8149 / NCTC 11857 / SLCC 5334 / V8).